Here is a 529-residue protein sequence, read N- to C-terminus: MARFPKADLAAAGVMLLCHFFTDQFQFADGKPGDQILDWQYGVTQAFPHTEEEVEVDSHAYSHRWKRNLDFLKAVDTNRASVGQDSPEPRSFTDLLLDDGQDNNTQIEEDTDHNYYISRIYGPSDSASRDLWVNIDQMEKDKVKIHGILSNTHRQAARVNLSFDFPFYGHFLREITVATGGFIYTGEVVHRMLTATQYIAPLMANFDPSVSRNSTVRYFDNGTALVVQWDHVHLQDNYNLGSFTFQATLLMDGRIIFGYKEIPVLVTQISSTNHPVKVGLSDAFVVVHRIQQIPNVRRRTIYEYHRVELQMSKITNISAVEMTPLPTCLQFNRCGPCVSSQIGFNCSWCSKLQRCSSGFDRHRQDWVDSGCPEESKEKMCENTEPVETSSRTTTTVGATTTQFRVLTTTRRAVTSQFPTSLPTEDDTKIALHLKDNGASTDDSAAEKKGGTLHAGLIIGILILVLIVATAILVTVYMYHHPTSAASIFFIERRPSRWPAMKFRRGSGHPAYAEVEPVGEKEGFIVSEQC.

A signal peptide spans M1–G30. At K31–A454 the chain is on the extracellular side. The disordered stretch occupies residues A80–N104. 2 N-linked (GlcNAc...) asparagine glycosylation sites follow: N103 and N160. Residues T327–P372 form the PSI domain. The helical transmembrane segment at G455–V475 threads the bilayer. The Cytoplasmic portion of the chain corresponds to Y476 to C529. S506 is modified (phosphoserine).

The protein belongs to the plexin family. Interacts with CTTN. Expressed in the endothelial cells of the stroma but not in the endothelial cells of normal colonic tissue.

Its subcellular location is the membrane. May play a role in tumor angiogenesis. This chain is Plexin domain-containing protein 2 (PLXDC2), found in Homo sapiens (Human).